A 329-amino-acid chain; its full sequence is GTPase Obg (329 aa).

The Obg domain maps to 1–159 (MQFIDQAIID…WSLQLELKLL (159 aa)). The OBG-type G domain occupies 160–328 (AEVGIIGLPN…LLSSIWYELG (169 aa)). Residues 166-173 (GLPNAGKS), 191-195 (FTTLI), 213-216 (DIPG), 280-283 (NKKE), and 309-311 (SAV) each bind ATP. Ser-173 and Thr-193 together coordinate Mg(2+).

This sequence belongs to the TRAFAC class OBG-HflX-like GTPase superfamily. OBG GTPase family. As to quaternary structure, monomer. Requires Mg(2+) as cofactor.

It is found in the cytoplasm. Functionally, an essential GTPase which binds GTP, GDP and possibly (p)ppGpp with moderate affinity, with high nucleotide exchange rates and a fairly low GTP hydrolysis rate. Plays a role in control of the cell cycle, stress response, ribosome biogenesis and in those bacteria that undergo differentiation, in morphogenesis control. The protein is GTPase Obg of Prochlorococcus marinus (strain NATL1A).